The chain runs to 175 residues: DELTA-stichotoxin-She4b (175 aa).

A plays an important role in the hemolytic activity region spans residues 1-10 (ALAGTIIAGA). Residues 9–28 (GASLTFQVLDKVLEELGKVS) form an N-terminal region region. Ser52, Val85, Ser103, Pro105, Tyr131, Tyr135, and Tyr136 together coordinate phosphocholine. The segment at 103–118 (SVPFDYNWYSNWWDVK) is trp-rich region, which is important for the binding to lipid membrane. Positions 141 to 143 (RGD) match the Cell attachment site, crucial for protein stability motif.

Octamer or nonamer in membranes. Monomer in the soluble state. Originally described as forming tetramer in the presence of a lipidic interface. As to expression, expressed in tentacles and mesenteric filaments.

It is found in the secreted. The protein resides in the nematocyst. It localises to the target cell membrane. Its function is as follows. Pore-forming protein that forms cations-selective hydrophilic pores of around 1 nm and causes cardiac stimulation and cytolysis. Pore formation is a multi-step process that involves specific recognition of membrane sphingomyelin (but neither cholesterol nor phosphatidylcholine) using aromatic rich region and adjacent phosphocholine (POC) binding site, firm binding to the membrane (mainly driven by hydrophobic interactions) accompanied by the transfer of the N-terminal region to the lipid-water interface and finally pore formation after oligomerization of monomers. Cytolytic effects include red blood cells hemolysis, platelet aggregation and lysis, cytotoxic and cytostatic effects on fibroblasts. Lethality in mammals has been ascribed to severe vasospasm of coronary vessels, cardiac arrhythmia, and inotropic effects. The sequence is that of DELTA-stichotoxin-She4b from Stichodactyla helianthus (Sun anemone).